The following is a 503-amino-acid chain: ATP-dependent RNA helicase dbp3 (503 aa).

Positions 1–13 (MGKRVSHNEGADR) are enriched in basic and acidic residues. The interval 1 to 37 (MGKRVSHNEGADRRPKKKAKNEKPEKETMESPAADVT) is disordered. The short motif at 104–112 (SFASPTPIQ) is the Q motif element. Residues 116–292 (WPLLFAGRDV…ATFMTSAVTV (177 aa)) enclose the Helicase ATP-binding domain. 129-136 (AETGSGKT) is an ATP binding site. The short motif at 239–242 (DEAD) is the DEAD box element. Residues 323–472 (RLVQLLSENQ…EVPQELLKFG (150 aa)) enclose the Helicase C-terminal domain.

Belongs to the DEAD box helicase family. DDX5/DBP2 subfamily.

The protein localises to the nucleus. The protein resides in the nucleolus. It catalyses the reaction ATP + H2O = ADP + phosphate + H(+). ATP-dependent RNA helicase required for 60S ribosomal subunit synthesis. Involved in efficient pre-rRNA processing, predominantly at site A3, which is necessary for the normal formation of 25S and 5.8S rRNAs. The polypeptide is ATP-dependent RNA helicase dbp3 (dbp3) (Aspergillus clavatus (strain ATCC 1007 / CBS 513.65 / DSM 816 / NCTC 3887 / NRRL 1 / QM 1276 / 107)).